Consider the following 111-residue polypeptide: Universal stress protein B (111 aa).

2 consecutive transmembrane segments (helical) span residues 1–21 (MFST…NMMR) and 90–110 (FILT…MLIW).

Belongs to the universal stress protein B family.

It localises to the cell inner membrane. The polypeptide is Universal stress protein B (Photorhabdus laumondii subsp. laumondii (strain DSM 15139 / CIP 105565 / TT01) (Photorhabdus luminescens subsp. laumondii)).